The primary structure comprises 118 residues: Basic phospholipase A2 PA-13 (118 aa).

7 disulfides stabilise this stretch: cysteine 11–cysteine 71, cysteine 27–cysteine 117, cysteine 29–cysteine 45, cysteine 44–cysteine 98, cysteine 51–cysteine 91, cysteine 60–cysteine 84, and cysteine 78–cysteine 89. Residues tyrosine 28, glycine 30, and glycine 32 each coordinate Ca(2+). Residue histidine 48 is part of the active site. Aspartate 49 is a Ca(2+) binding site. Aspartate 92 is a catalytic residue.

It belongs to the phospholipase A2 family. Group I subfamily. D49 sub-subfamily. Ca(2+) is required as a cofactor. As to expression, expressed by the venom gland.

Its subcellular location is the secreted. The enzyme catalyses a 1,2-diacyl-sn-glycero-3-phosphocholine + H2O = a 1-acyl-sn-glycero-3-phosphocholine + a fatty acid + H(+). In terms of biological role, PLA2 catalyzes the calcium-dependent hydrolysis of the 2-acyl groups in 3-sn-phosphoglycerides. This Pseudechis australis (Mulga snake) protein is Basic phospholipase A2 PA-13.